The sequence spans 355 residues: F-box only protein 32 (355 aa).

The Nuclear localization signal motif lies at 62–67; that stretch reads KKRKKD. A Nuclear export signal motif is present at residues 169 to 173; that stretch reads LLQTL. Positions 223-271 constitute an F-box domain; that stretch reads LTFTDLPLCLQLNIMQRLSDGRDLVSLGQVAPDLHVLSEDRLLWKKLCQ. Positions 280–295 match the Bipartite nuclear localization signal motif; it reads RKRLILSDKGQLDWKK.

As to quaternary structure, part of the SCF (SKP1-CUL1-F-box) E3 ubiquitin-protein ligase complex SCF(FBXO32) formed of CUL1, SKP1, RBX1 and FBXO32.

It localises to the cytoplasm. It is found in the nucleus. It functions in the pathway protein modification; protein ubiquitination. Substrate recognition component of a SCF (SKP1-CUL1-F-box protein) E3 ubiquitin-protein ligase complex which mediates the ubiquitination and subsequent proteasomal degradation of target proteins. Probably recognizes and binds to phosphorylated target proteins during skeletal muscle atrophy. Recognizes TERF1. The protein is F-box only protein 32 (FBXO32) of Bos taurus (Bovine).